Reading from the N-terminus, the 378-residue chain is Nucleosome assembly protein 1;1 (378 aa).

Residues 33 to 87 are a coiled coil; the sequence is VNALKDKLQSLAGQHTDVLEALSPNVRKRVEYLREIQGQHDEIELKFFEERAALE. A Nuclear export signal motif is present at residues 54-69; the sequence is LSPNVRKRVEYLREIQ. Residues 230 to 235 carry the Nuclear localization signal motif; it reads KKKPKK. Positions 306-378 are disordered; it reads AVQAEDFDDM…ADQPADCKQQ (73 aa). Positions 308–344 are enriched in acidic residues; it reads QAEDFDDMEDDEEDDEDDDEDEEEEEEDEDEDEDDEE. The Nuclear localization signal motif lies at 348–352; that stretch reads KPKKK. Residues 356-378 are compositionally biased toward low complexity; the sequence is KPKLPSKGGAQGGADQPADCKQQ. Cys375 is subject to Cysteine methyl ester. Cys375 is lipidated: S-farnesyl cysteine. Residues 376–378 constitute a propeptide, removed in mature form; the sequence is KQQ.

This sequence belongs to the nucleosome assembly protein (NAP) family.

It localises to the nucleus. Its subcellular location is the cytoplasm. Functionally, may modulate chromatin structure by regulation of nucleosome assembly/disassembly. This is Nucleosome assembly protein 1;1 (NAP1;1) from Oryza sativa subsp. japonica (Rice).